The following is a 222-amino-acid chain: 2-C-methyl-D-erythritol 4-phosphate cytidylyltransferase (222 aa).

This sequence belongs to the IspD/TarI cytidylyltransferase family. IspD subfamily.

It carries out the reaction 2-C-methyl-D-erythritol 4-phosphate + CTP + H(+) = 4-CDP-2-C-methyl-D-erythritol + diphosphate. It participates in isoprenoid biosynthesis; isopentenyl diphosphate biosynthesis via DXP pathway; isopentenyl diphosphate from 1-deoxy-D-xylulose 5-phosphate: step 2/6. Its function is as follows. Catalyzes the formation of 4-diphosphocytidyl-2-C-methyl-D-erythritol from CTP and 2-C-methyl-D-erythritol 4-phosphate (MEP). In Thermotoga petrophila (strain ATCC BAA-488 / DSM 13995 / JCM 10881 / RKU-1), this protein is 2-C-methyl-D-erythritol 4-phosphate cytidylyltransferase.